Consider the following 284-residue polypeptide: Bifunctional protein FolD (284 aa).

Residues 165–167, serine 190, and isoleucine 231 contribute to the NADP(+) site; that span reads GRS.

The protein belongs to the tetrahydrofolate dehydrogenase/cyclohydrolase family. Homodimer.

It carries out the reaction (6R)-5,10-methylene-5,6,7,8-tetrahydrofolate + NADP(+) = (6R)-5,10-methenyltetrahydrofolate + NADPH. The catalysed reaction is (6R)-5,10-methenyltetrahydrofolate + H2O = (6R)-10-formyltetrahydrofolate + H(+). It participates in one-carbon metabolism; tetrahydrofolate interconversion. Catalyzes the oxidation of 5,10-methylenetetrahydrofolate to 5,10-methenyltetrahydrofolate and then the hydrolysis of 5,10-methenyltetrahydrofolate to 10-formyltetrahydrofolate. This Dechloromonas aromatica (strain RCB) protein is Bifunctional protein FolD.